A 269-amino-acid polypeptide reads, in one-letter code: Proline-rich protein 7 (269 aa).

The Extracellular segment spans residues 1-9 (MVMSQGTYT). The required for interaction with NMDA receptors stretch occupies residues 1–44 (MVMSQGTYTFLTCFAGFWLIWGLIVLLCCFCSFLRRRLKRRQEE). The required for membrane localization stretch occupies residues 2-39 (VMSQGTYTFLTCFAGFWLIWGLIVLLCCFCSFLRRRLK). A helical; Signal-anchor for type III membrane protein membrane pass occupies residues 10–30 (FLTCFAGFWLIWGLIVLLCCF). Residues 31–269 (CSFLRRRLKR…IPLFGRTTAV (239 aa)) lie on the Cytoplasmic side of the membrane. Residue Ser-64 is modified to Phosphoserine. Disordered regions lie at residues 64–83 (SLAG…RSRL) and 98–128 (LLHH…LSVP). Basic residues predominate over residues 108-117 (AHPHPHHHAL). The segment covering 118-128 (PHPPPSHLSVP) has biased composition (pro residues). A required for internalization region spans residues 146-166 (PCYEEAVLMAEPPPPYSEVLT). A required for apoptosis induction region spans residues 146 to 269 (PCYEEAVLMA…IPLFGRTTAV (124 aa)). The short motif at 267-269 (TAV) is the PDZ-binding element.

As to quaternary structure, forms a complex with NMDA receptor zeta subunit GRIN1 and epsilon subunit GRIN2B. Interacts with GRIN2B. Interacts with GRIN1; the interaction is reduced upon NMDA receptor activity. Found in a postsynaptic membrane complex with DLG4 and GRIN1. Interacts with DLG4 (via PDZ3 domain and to lesser degree via PDZ2 domain). Interacts with FBXW7. Found in a complex with JUN and FBXW7. Interacts with JUN and FBXW7; the interaction inhibits ubiquitination-mediated JUN degradation promoting its phosphorylation and transcriptional activity. Interacts with SRC. In terms of processing, palmitoylated. Tyrosine phosphorylated, possibly by SRC. In terms of tissue distribution, expressed in brain. Expressed in the cerebral cortex and especially in hippocampal neural cells (at protein level).

It is found in the cell membrane. The protein localises to the postsynaptic cell membrane. Its subcellular location is the postsynaptic density membrane. It localises to the cytoplasm. The protein resides in the perinuclear region. It is found in the synapse. The protein localises to the cell projection. Its subcellular location is the dendrite. It localises to the nucleus. Functionally, acts as a synapse-to-nucleus messenger to promote NMDA receptor-mediated excitotoxicity in neurons in a JUN-dependent manner. Inhibits ubiquitination-mediated degradation and promotes phosphorylation and transcriptional activity of transcription factor JUN. Might play a redundant role in the regulation of T cell receptor signaling. Might promote apoptosis in T cells. The polypeptide is Proline-rich protein 7 (Prr7) (Rattus norvegicus (Rat)).